The chain runs to 440 residues: 6-phospho-alpha-glucosidase (440 aa).

4–70 (FSIVVAGGGS…PDINFVYTTD (67 aa)) provides a ligand contact to NAD(+). Substrate is bound by residues Arg-93 and Asn-147. Mn(2+) is bound at residue Cys-169. Asp-170 serves as the catalytic Proton donor. A Mn(2+)-binding site is contributed by His-200. Tyr-263 (proton acceptor) is an active-site residue. Arg-283 lines the substrate pocket.

Belongs to the glycosyl hydrolase 4 family. Homodimer. NAD(+) serves as cofactor. It depends on Mn(2+) as a cofactor.

Its pathway is glycan degradation; palatinose degradation. In vitro, readily hydrolyzes p-nitrophenyl-alpha-D-glucopyranoside 6-phosphate (pNPalphaG6P), a chromogenic analog of the phosphorylated isomers of sucrose. In vivo, is probably involved in the degradation of the 6-phosphate derivatives of the sucrose isomers trehalulose, turanose, maltulose and palatinose, catalyzing their hydrolysis into glucose 6-phosphate (G6P) and fructose, which allows the bacterium to use these sugars as energy sources for growth. Is not able to hydrolyze the C2 or C4 chromogenic stereomers (i.e. pNPalpha-mannopyranoside-6P and pNPalpha-galactopyranoside-6P, respectively). In Leptotrichia buccalis (strain ATCC 14201 / DSM 1135 / JCM 12969 / NCTC 10249 / C-1013-b), this protein is 6-phospho-alpha-glucosidase (pagL).